Consider the following 205-residue polypeptide: Protein-L-isoaspartate O-methyltransferase (205 aa).

The active site involves Ser-52.

The protein belongs to the methyltransferase superfamily. L-isoaspartyl/D-aspartyl protein methyltransferase family.

It is found in the cytoplasm. It catalyses the reaction [protein]-L-isoaspartate + S-adenosyl-L-methionine = [protein]-L-isoaspartate alpha-methyl ester + S-adenosyl-L-homocysteine. Functionally, catalyzes the methyl esterification of L-isoaspartyl residues in peptides and proteins that result from spontaneous decomposition of normal L-aspartyl and L-asparaginyl residues. It plays a role in the repair and/or degradation of damaged proteins. This Gloeobacter violaceus (strain ATCC 29082 / PCC 7421) protein is Protein-L-isoaspartate O-methyltransferase.